The chain runs to 352 residues: Heat-inducible transcription repressor HrcA (352 aa).

This sequence belongs to the HrcA family.

Functionally, negative regulator of class I heat shock genes (grpE-dnaK-dnaJ and groELS operons). Prevents heat-shock induction of these operons. The chain is Heat-inducible transcription repressor HrcA from Prochlorococcus marinus (strain MIT 9313).